A 729-amino-acid chain; its full sequence is MAEGGGGSAVALQDLQAIAAGLPGDAFAVLGPHVQADGRLRVRVLAPGAEALGLIDGRGKLLARMQASPIDGVFEGELPADAAYRLRIVWPDVVQEIEDPYAFAPQIDESALLQIGAGDGQALRANLGARHVQVGELPAVRFAVWAPHAQRVAVVGDFNGWEPRRHPMRQRSGGIWELVLPRVETGARYKYAIITADGRVLLKADPVARQSELPPATASVVASADAFAWTDAEWMARRSAAAEPAPLSIYEVHAASWRRDGHDQPLDWVSLAAQLIPYVQELGFTHIELLPITEHPFGGSWGYQPLGLYAPTARHGSPDGFAQFVDACHRAGIGVILDWVSAHFPDDAHGLSQFDGSATYEHADPREGMHRDWNTLIYNYGRPEVTAYLLGSAMEWIAHYHLDGLRVDAVASMLYRDYGRAEGEWVPNAHGGRENLEAVAFLRQLTGEIASQFPGVLTIAEESTAWPGVTAPISEGGLGFTHKWNMGWMHDTLHYMQRDPAARAQHHSQLTFGLVYAFSERFVLPLSHDEVVHGTGGLLGQMPGDDWRRFANLRAYLALMWAHPGDKLLFMGAEFGQWADWNHDRSLDWHLLDHAPHRGMQQLVRDLNRALRRVPALYRGNHRADGFEWSVADDARNSVLAFIRHDPDGGAPLLAVSNLTPQPHHDYRVGVPRAGGWREILNTDSAHYGGSNLGNGGRLLTEPTGMHGHAQSLRLTLPPLATIYLQAEK.

The active-site Nucleophile is the aspartate 408. Glutamate 461 acts as the Proton donor in catalysis.

It belongs to the glycosyl hydrolase 13 family. GlgB subfamily. In terms of assembly, monomer.

It carries out the reaction Transfers a segment of a (1-&gt;4)-alpha-D-glucan chain to a primary hydroxy group in a similar glucan chain.. It functions in the pathway glycan biosynthesis; glycogen biosynthesis. Its function is as follows. Catalyzes the formation of the alpha-1,6-glucosidic linkages in glycogen by scission of a 1,4-alpha-linked oligosaccharide from growing alpha-1,4-glucan chains and the subsequent attachment of the oligosaccharide to the alpha-1,6 position. This is 1,4-alpha-glucan branching enzyme GlgB 2 from Xanthomonas campestris pv. campestris (strain 8004).